The sequence spans 114 residues: Large ribosomal subunit protein uL22 (114 aa).

The protein belongs to the universal ribosomal protein uL22 family. In terms of assembly, part of the 50S ribosomal subunit.

This protein binds specifically to 23S rRNA; its binding is stimulated by other ribosomal proteins, e.g. L4, L17, and L20. It is important during the early stages of 50S assembly. It makes multiple contacts with different domains of the 23S rRNA in the assembled 50S subunit and ribosome. In terms of biological role, the globular domain of the protein is located near the polypeptide exit tunnel on the outside of the subunit, while an extended beta-hairpin is found that lines the wall of the exit tunnel in the center of the 70S ribosome. This Streptococcus gordonii (strain Challis / ATCC 35105 / BCRC 15272 / CH1 / DL1 / V288) protein is Large ribosomal subunit protein uL22.